A 49-amino-acid chain; its full sequence is Small, acid-soluble spore protein O (49 aa).

The disordered stretch occupies residues 1 to 49 (MGKRKANHTISGMNAASAQGQGAGYNEEFANENLTAAERQNNKKRKKNQ). A compositionally biased stretch (polar residues) spans 8-20 (HTISGMNAASAQG).

The protein belongs to the SspO family.

It localises to the spore core. This is Small, acid-soluble spore protein O from Bacillus cereus (strain AH187).